Consider the following 1320-residue polypeptide: MMLRTFTLLLLCIWLNRGMTSMAAVESQPELWIESNYPQAPWENITLWCKSPSRVSSKFLLLKDNTQMTWIHPPYKTFQVSFFIGALTESNTGLYRCCYWNEKGWSKPSKILELEAPGQLPKPIFWIQAETPPFPGCNVNILCHGWLQDLVFMLFKEGYTEPIDYQVPTGTMAIFSIDNLAPENEGIYICRTHIQMLPTLWSEPSNPLKLVVAGLYPKPTLTAHPGPILAPGESLSLRCQGPIYGMTFALMRLEDLKKPYYYKKPIKNEAYFYFQALKTQDTGHYLCFYYDGSYRGSLLSDILKIWVTDTFPKTWLLVQPSPVIQMGQNVSLRCGGLMDGVGLALHKKGEEKPLQFLDATSNTGNNSFFLKNVTYRDAGIYSCHYYLTWKTSIKMATYNTVELIVVAWPSSVFKVGKTITLQCRVSHPVLEFSLEWEETTTFQKFSVDGDFIITNIEGQGTGTYSCSYRIESHANIWSHRSEPLKLVGPAVTGFLPWNSILNEAIRVSLTVQFLSLLLLVLWLQWKCRRLRLREAWLLGTAQGVAMLVILIALLCCGLCNGALTEEIEIIMPTPKPELWAETNFPQAPWKNVTLWCRSPSGSTKEFVLLKDGTGWIATRPASEQVRAAFPLGALTQSHTGSYHCHSWEEMAVSEPSEALELVGTDILPKPVISASLPIRGQELQIRCKGWLEGLGFALYKMGEQEPVQQLGAVGREAFFTIQRMEDKEEGNYSCRTHTEKQPFKWSEPSAPLELVIKELYPKPFFKTWASPVVTPGSRVTFNCSTSREHMSFILYKDGNEIASSDPVWGNPGTSTAHFLIISVGIGDGGNYSCRYYDFSIWSEPSDPVELIVTEFYPKPTLLAQPGPVVLPGKNVTLRCQGIFQGMRFALLQEGAHAPLQFQSASGTSVDFLLHTVGAEDFGNYSCVYYETTMSNRGSYLSTPLMIWVTDTFPRPWLSAEPSSVVTMGQNVTLWCQGPVHGVGYILHKEGEATSMQLWDSTSNEGAFPIINISGASIGRYSCCYHPDWMSPIKIQPSNTLELIVTGLLPKPSLLVQPGPMVVPGENMTFQCQGELPDSTFVLLKEGTQQPIEQQRPSGYRADFWMPVVRDQDSGVYSCVYYLDSAPLVASNHSNSLEIWVTDKPPKPSLSAWPSTVFKLGKDITLQCRGPLPGVEFVLEHDGEEAPQQFSEDGDFVIGNMEGKGIGNYSCSYRLQAYPDIWSEPSDSLELVGAAGPVAQECTVGNIVRSTLIVVVVVALGIVLAIEWKKWPRLRTRGSETDGRDQTIVLEECNQDGEPGTATNSPSSALQGVSVEQTVPI.

An N-terminal signal peptide occupies residues 1–18 (MMLRTFTLLLLCIWLNRG). Residues 19-504 (MTSMAAVESQ…LPWNSILNEA (486 aa)) lie on the Extracellular side of the membrane. 5 Ig-like C2-type domains span residues 29–113 (PELW…KILE), 115–212 (EAPG…KLVV), 224–308 (HPGP…IWVT), 312–399 (PKTW…ATYN), and 401–482 (VELI…HRSE). The N-linked (GlcNAc...) asparagine glycan is linked to Asn44. A disulfide bridge links Cys49 with Cys97. N-linked (GlcNAc...) asparagine glycans are attached at residues Asn329, Asn365, and Asn372. 2 disulfides stabilise this stretch: Cys334-Cys383 and Cys423-Cys466. A helical transmembrane segment spans residues 505–525 (IRVSLTVQFLSLLLLVLWLQW). Residues 526-534 (KCRRLRLRE) are Cytoplasmic-facing. Residues 535-555 (AWLLGTAQGVAMLVILIALLC) form a helical membrane-spanning segment. Over 556-1320 (CGLCNGALTE…GVSVEQTVPI (765 aa)) the chain is Extracellular. 7 consecutive Ig-like C2-type domains span residues 572 to 665 (PTPK…VGTD), 662 to 756 (VGTD…ELVI), 761 to 853 (PKPF…LIVT), 857 to 942 (PKPT…YLST), 949 to 1044 (TDTF…ELIV), 1049 to 1134 (PKPS…NHSN), and 1145 to 1226 (PKPS…EPSD). 9 N-linked (GlcNAc...) asparagine glycosylation sites follow: Asn591, Asn731, Asn782, Asn830, Asn874, Asn923, Asn970, Asn1011, and Asn1066. Residues Cys783 and Cys833 are joined by a disulfide bond. A disulfide bridge connects residues Cys879 and Cys926. The cysteines at positions 1071 and 1118 are disulfide-linked. Asn1131 and Asn1207 each carry an N-linked (GlcNAc...) asparagine glycan. Cys1167 and Cys1210 are disulfide-bonded.

In terms of assembly, interacts with INHA; the interaction is not confirmed by standard receptor binding assays. Interacts with ACVR1B; the interaction appears to be ligand-dependent as it is diminished by inhibin B and activin A. Interacts with ACVR2A, ACVR2B, ACVRL1 and BMPR1B. Interacts with HECTD1. Expressed in pituitary gland, testis and liver. Isoform 2 is expressed pituitary gland and testis.

Its subcellular location is the membrane. The protein resides in the secreted. Functionally, seems to be a coreceptor in inhibin signaling, but seems not to be a high-affinity inhibin receptor. Antagonizes activin A signaling in the presence or absence of inhibin B. Necessary to mediate a specific antagonistic effect of inhibin B on activin-stimulated transcription. The protein is Immunoglobulin superfamily member 1 (Igsf1) of Rattus norvegicus (Rat).